Reading from the N-terminus, the 48-residue chain is Small, acid-soluble spore protein O (48 aa).

Residues 1-23 (MTKRKANHVINGMNAAKSQGNGA) form a disordered region.

This sequence belongs to the SspO family.

The protein resides in the spore core. In Bacillus pumilus (strain SAFR-032), this protein is Small, acid-soluble spore protein O.